A 599-amino-acid polypeptide reads, in one-letter code: Aspartate--tRNA(Asp/Asn) ligase (599 aa).

An L-aspartate-binding site is contributed by glutamate 169. Residues 193–196 (QLFK) form an aspartate region. Arginine 215 is an L-aspartate binding site. ATP contacts are provided by residues 215–217 (RDE) and glutamine 224. Histidine 447 is a binding site for L-aspartate. Residue glutamate 481 participates in ATP binding. Arginine 488 is an L-aspartate binding site. 533–536 (GWDR) is an ATP binding site.

It belongs to the class-II aminoacyl-tRNA synthetase family. Type 1 subfamily. Homodimer.

The protein localises to the cytoplasm. The enzyme catalyses tRNA(Asx) + L-aspartate + ATP = L-aspartyl-tRNA(Asx) + AMP + diphosphate. Functionally, aspartyl-tRNA synthetase with relaxed tRNA specificity since it is able to aspartylate not only its cognate tRNA(Asp) but also tRNA(Asn). Reaction proceeds in two steps: L-aspartate is first activated by ATP to form Asp-AMP and then transferred to the acceptor end of tRNA(Asp/Asn). The protein is Aspartate--tRNA(Asp/Asn) ligase of Pseudarthrobacter chlorophenolicus (strain ATCC 700700 / DSM 12829 / CIP 107037 / JCM 12360 / KCTC 9906 / NCIMB 13794 / A6) (Arthrobacter chlorophenolicus).